We begin with the raw amino-acid sequence, 175 residues long: ATP synthase subunit b (175 aa).

A helical membrane pass occupies residues 18–38 (VTSWEPFVANLIAFILMVVIL).

It belongs to the ATPase B chain family. As to quaternary structure, F-type ATPases have 2 components, F(1) - the catalytic core - and F(0) - the membrane proton channel. F(1) has five subunits: alpha(3), beta(3), gamma(1), delta(1), epsilon(1). F(0) has three main subunits: a(1), b(2) and c(10-14). The alpha and beta chains form an alternating ring which encloses part of the gamma chain. F(1) is attached to F(0) by a central stalk formed by the gamma and epsilon chains, while a peripheral stalk is formed by the delta and b chains.

Its subcellular location is the cell inner membrane. Functionally, f(1)F(0) ATP synthase produces ATP from ADP in the presence of a proton or sodium gradient. F-type ATPases consist of two structural domains, F(1) containing the extramembraneous catalytic core and F(0) containing the membrane proton channel, linked together by a central stalk and a peripheral stalk. During catalysis, ATP synthesis in the catalytic domain of F(1) is coupled via a rotary mechanism of the central stalk subunits to proton translocation. Component of the F(0) channel, it forms part of the peripheral stalk, linking F(1) to F(0). This is ATP synthase subunit b from Akkermansia muciniphila (strain ATCC BAA-835 / DSM 22959 / JCM 33894 / BCRC 81048 / CCUG 64013 / CIP 107961 / Muc).